The chain runs to 226 residues: Cytidylate kinase (226 aa).

An ATP-binding site is contributed by Gly-10–Thr-18.

The protein belongs to the cytidylate kinase family. Type 1 subfamily.

The protein localises to the cytoplasm. It catalyses the reaction CMP + ATP = CDP + ADP. The catalysed reaction is dCMP + ATP = dCDP + ADP. The polypeptide is Cytidylate kinase (Streptococcus equi subsp. zooepidemicus (strain MGCS10565)).